Here is a 519-residue protein sequence, read N- to C-terminus: Threonine synthase, chloroplastic (519 aa).

The N-terminal 40 residues, 1–40 (MAASCMLRSSFISPGLPQLHHQSTSKPNNGIHFFTPIKAT), are a transit peptide targeting the chloroplast. Lys-196 is modified (N6-(pyridoxal phosphate)lysine). Residues 328–332 (GNLGN) and Thr-465 each bind pyridoxal 5'-phosphate.

This sequence belongs to the threonine synthase family. Homodimer. It depends on pyridoxal 5'-phosphate as a cofactor.

It localises to the plastid. It is found in the chloroplast. It carries out the reaction O-phospho-L-homoserine + H2O = L-threonine + phosphate. The protein operates within amino-acid biosynthesis; L-threonine biosynthesis; L-threonine from L-aspartate: step 5/5. With respect to regulation, allosterically activated by S-adenosyl-methionine (SAM). In terms of biological role, catalyzes the gamma-elimination of phosphate from L-phosphohomoserine and the beta-addition of water to produce L-threonine. In Solanum tuberosum (Potato), this protein is Threonine synthase, chloroplastic.